Reading from the N-terminus, the 658-residue chain is Threonine--tRNA ligase (658 aa).

The 61-residue stretch at 1-61 (MSDVRVIIQR…RDGESVEPVE (61 aa)) folds into the TGS domain. A catalytic region spans residues 259–554 (DHRKLGNELD…LLEHYAGAFP (296 aa)). Zn(2+) contacts are provided by cysteine 353, histidine 404, and histidine 531.

This sequence belongs to the class-II aminoacyl-tRNA synthetase family. In terms of assembly, homodimer. The cofactor is Zn(2+).

The protein localises to the cytoplasm. The enzyme catalyses tRNA(Thr) + L-threonine + ATP = L-threonyl-tRNA(Thr) + AMP + diphosphate + H(+). In terms of biological role, catalyzes the attachment of threonine to tRNA(Thr) in a two-step reaction: L-threonine is first activated by ATP to form Thr-AMP and then transferred to the acceptor end of tRNA(Thr). Also edits incorrectly charged L-seryl-tRNA(Thr). This is Threonine--tRNA ligase from Streptomyces griseus subsp. griseus (strain JCM 4626 / CBS 651.72 / NBRC 13350 / KCC S-0626 / ISP 5235).